Here is a 417-residue protein sequence, read N- to C-terminus: Carboxypeptidase B (417 aa).

A signal peptide spans 1-15 (MLALLVLVTVALASA). A propeptide spans 16-110 (HHGGEHFEGE…VEAQFDSRVR (95 aa)) (activation peptide). The region spanning 118–412 (KYNKWETIEA…LAIKYVASYV (295 aa)) is the Peptidase M14 domain. A disulfide bridge connects residues Cys-173 and Cys-186. Residues His-176 and Glu-179 each contribute to the Zn(2+) site. Substrate-binding positions include 176–179 (HARE), Arg-234, and 251–252 (NR). 2 cysteine pairs are disulfide-bonded: Cys-245-Cys-268 and Cys-259-Cys-273. Residue His-304 participates in Zn(2+) binding. Residues 305 to 306 (SY) and Tyr-356 each bind substrate. Residue Glu-378 is the Proton donor/acceptor of the active site.

It belongs to the peptidase M14 family. Requires Zn(2+) as cofactor. As to expression, pancreas.

Its subcellular location is the secreted. It localises to the zymogen granule lumen. It carries out the reaction Preferential release of a C-terminal lysine or arginine amino acid.. This chain is Carboxypeptidase B (CPB1), found in Homo sapiens (Human).